A 1833-amino-acid polypeptide reads, in one-letter code: Proteasome activator complex subunit 4A (1833 aa).

2 HEAT repeats span residues 460 to 504 and 983 to 1022; these read PEGP…LVDC and NFCCRDIIPVVLKYLDPERTDVTQQQFKGALYCLLGNHSG. Residues 1095–1122 form a disordered region; the sequence is SSSPEPNPGAASEQEELEGRKREEQKNK. The segment covering 1111-1122 has biased composition (basic and acidic residues); the sequence is LEGRKREEQKNK. HEAT repeat units follow at residues 1164–1202, 1344–1382, 1626–1664, and 1670–1708; these read LPLPSSAVLFFVESLNHDSLLVRNVAISAVAGILKQLKR, DAFLPLLKPHMERLVADSHESPQRCVAEIISGLIRGSKH, SDQIPQVLSALEEISRSSSWHARYTILTYLQIMVFYNLF, and AKAVCDVRALVLRLLEDEQLEVREMAATTLSGFLQCNFL. Positions 1640–1728 are bromodomain-like (BRDL); that stretch reads SRSSSWHARY…ESLSKTRLPK (89 aa).

This sequence belongs to the BLM10 family. Homodimer. Interacts with the 20S and 26S proteasomes.

It localises to the cytoplasm. Its subcellular location is the cytosol. The protein resides in the nucleus. The protein localises to the nucleus speckle. Its function is as follows. Associated component of the proteasome that specifically recognizes acetylated histones and promotes ATP- and ubiquitin-independent degradation of core histones during DNA damage response. Recognizes and binds acetylated histones via its bromodomain-like (BRDL) region and activates the proteasome by opening the gated channel for substrate entry. Binds to the core proteasome via its C-terminus, which occupies the same binding sites as the proteasomal ATPases, opening the closed structure of the proteasome via an active gating mechanism. involved in DNA damage response in somatic cells: binds to acetylated histones and promotes degradation of histones. In Danio rerio (Zebrafish), this protein is Proteasome activator complex subunit 4A (psme4a).